Consider the following 441-residue polypeptide: DNA primase DnaG (441 aa).

In terms of domain architecture, Toprim spans 165-241; the sequence is DTIIIVEGRA…DIDYVARAPP (77 aa). Mg(2+) contacts are provided by E171, D215, and D217. The span at 299 to 315 shows a compositional bias: basic and acidic residues; sequence KEEVAERGEEMESKAEG. Residues 299–320 are disordered; that stretch reads KEEVAERGEEMESKAEGAEQPT.

Belongs to the archaeal DnaG primase family. Forms a ternary complex with MCM helicase and DNA. Component of the archaeal exosome complex. Mg(2+) is required as a cofactor.

The enzyme catalyses ssDNA + n NTP = ssDNA/pppN(pN)n-1 hybrid + (n-1) diphosphate.. RNA polymerase that catalyzes the synthesis of short RNA molecules used as primers for DNA polymerase during DNA replication. Also part of the exosome, which is a complex involved in RNA degradation. Acts as a poly(A)-binding protein that enhances the interaction between heteromeric, adenine-rich transcripts and the exosome. This Ignicoccus hospitalis (strain KIN4/I / DSM 18386 / JCM 14125) protein is DNA primase DnaG.